Reading from the N-terminus, the 65-residue chain is Large ribosomal subunit protein bL35 (65 aa).

Composition is skewed to basic residues over residues 1–15 and 26–44; these read MPKMKTKKSASKRFT and QAFKRHILTKKTTKNKRQL. Residues 1–65 are disordered; the sequence is MPKMKTKKSA…KSVRAMMPYA (65 aa).

This sequence belongs to the bacterial ribosomal protein bL35 family.

In Ralstonia nicotianae (strain ATCC BAA-1114 / GMI1000) (Ralstonia solanacearum), this protein is Large ribosomal subunit protein bL35.